Consider the following 574-residue polypeptide: Proline--tRNA ligase (574 aa).

It belongs to the class-II aminoacyl-tRNA synthetase family. ProS type 1 subfamily. Homodimer.

It localises to the cytoplasm. It carries out the reaction tRNA(Pro) + L-proline + ATP = L-prolyl-tRNA(Pro) + AMP + diphosphate. In terms of biological role, catalyzes the attachment of proline to tRNA(Pro) in a two-step reaction: proline is first activated by ATP to form Pro-AMP and then transferred to the acceptor end of tRNA(Pro). As ProRS can inadvertently accommodate and process non-cognate amino acids such as alanine and cysteine, to avoid such errors it has two additional distinct editing activities against alanine. One activity is designated as 'pretransfer' editing and involves the tRNA(Pro)-independent hydrolysis of activated Ala-AMP. The other activity is designated 'posttransfer' editing and involves deacylation of mischarged Ala-tRNA(Pro). The misacylated Cys-tRNA(Pro) is not edited by ProRS. In Anaeromyxobacter sp. (strain K), this protein is Proline--tRNA ligase.